Reading from the N-terminus, the 379-residue chain is Carbamoyl phosphate synthase small chain (379 aa).

The CPSase stretch occupies residues 1–189; sequence MSKSALLVLE…GLPEAKDDSE (189 aa). L-glutamine is bound by residues S47, G241, and G243. The Glutamine amidotransferase type-1 domain occupies 193-379; it reads HVVAYDFGAK…FIELIKQHSA (187 aa). C269 (nucleophile) is an active-site residue. Positions 270, 273, 311, 313, and 314 each coordinate L-glutamine. Residues H353 and E355 contribute to the active site.

The protein belongs to the CarA family. In terms of assembly, composed of two chains; the small (or glutamine) chain promotes the hydrolysis of glutamine to ammonia, which is used by the large (or ammonia) chain to synthesize carbamoyl phosphate. Tetramer of heterodimers (alpha,beta)4.

It carries out the reaction hydrogencarbonate + L-glutamine + 2 ATP + H2O = carbamoyl phosphate + L-glutamate + 2 ADP + phosphate + 2 H(+). The enzyme catalyses L-glutamine + H2O = L-glutamate + NH4(+). It participates in amino-acid biosynthesis; L-arginine biosynthesis; carbamoyl phosphate from bicarbonate: step 1/1. Its pathway is pyrimidine metabolism; UMP biosynthesis via de novo pathway; (S)-dihydroorotate from bicarbonate: step 1/3. Its function is as follows. Small subunit of the glutamine-dependent carbamoyl phosphate synthetase (CPSase). CPSase catalyzes the formation of carbamoyl phosphate from the ammonia moiety of glutamine, carbonate, and phosphate donated by ATP, constituting the first step of 2 biosynthetic pathways, one leading to arginine and/or urea and the other to pyrimidine nucleotides. The small subunit (glutamine amidotransferase) binds and cleaves glutamine to supply the large subunit with the substrate ammonia. The polypeptide is Carbamoyl phosphate synthase small chain (Vibrio vulnificus (strain YJ016)).